We begin with the raw amino-acid sequence, 104 residues long: Pterin-4-alpha-carbinolamine dehydratase (104 aa).

Position 2 is an N-acetylalanine (Ala-2). Substrate-binding positions include 61–63 (DHH) and 78–81 (STHE).

Belongs to the pterin-4-alpha-carbinolamine dehydratase family. As to quaternary structure, homotetramer and homodimer. Heterotetramer with HNF1A; formed by a dimer of dimers. Interacts with HNF1B (via HNF-p1 domain); the interaction increases HNF1B transactivation activity.

It localises to the cytoplasm. The protein localises to the nucleus. It carries out the reaction (4aS,6R)-4a-hydroxy-L-erythro-5,6,7,8-tetrahydrobiopterin = (6R)-L-erythro-6,7-dihydrobiopterin + H2O. In terms of biological role, involved in tetrahydrobiopterin biosynthesis. Seems to both prevent the formation of 7-pterins and accelerate the formation of quinonoid-BH2. Coactivator for HNF1A-dependent transcription. Regulates the dimerization of homeodomain protein HNF1A and enhances its transcriptional activity. Also acts as a coactivator for HNF1B-dependent transcription. The sequence is that of Pterin-4-alpha-carbinolamine dehydratase (PCBD1) from Bos taurus (Bovine).